The primary structure comprises 309 residues: MGINFDVSRPKARSSINMTTKFHTIGLIGKPHHLGTNQTLKRLHHWLTMQGYEVLAEERVSTELGTNIEAVDLLEIGARCDLAIVVGGDGNMLGAARVLARFDLGVIGVNRGNLGFLTDLPPDAFEEALARVLDGEFDTEHRFLLEAEVYRHGMLKASNTAVNEAVLHPGKIAHMIEFEVYIDDQFMYSQRADGMIVSTPTGSTAYALSAGGAILTPNLQALILVPMFPHTLSCRPIVVDACSTIKMVVSPENGENLEVSCDGHVHLAVLPGDEIIIRRSSERLRLIHPKGHNYFHVLRTKLGWGSKLF.

The active-site Proton acceptor is the Asp89. NAD(+) contacts are provided by residues 89-90 (DG), 163-164 (NE), His174, Arg191, Asp193, and 204-209 (TAYALS).

Belongs to the NAD kinase family. A divalent metal cation serves as cofactor.

The protein localises to the cytoplasm. It carries out the reaction NAD(+) + ATP = ADP + NADP(+) + H(+). In terms of biological role, involved in the regulation of the intracellular balance of NAD and NADP, and is a key enzyme in the biosynthesis of NADP. Catalyzes specifically the phosphorylation on 2'-hydroxyl of the adenosine moiety of NAD to yield NADP. This chain is NAD kinase, found in Shewanella sp. (strain W3-18-1).